The sequence spans 198 residues: Acyl carrier protein phosphodiesterase (198 aa).

The protein belongs to the AcpH family.

The catalysed reaction is holo-[ACP] + H2O = apo-[ACP] + (R)-4'-phosphopantetheine + H(+). Functionally, converts holo-ACP to apo-ACP by hydrolytic cleavage of the phosphopantetheine prosthetic group from ACP. The protein is Acyl carrier protein phosphodiesterase of Photorhabdus laumondii subsp. laumondii (strain DSM 15139 / CIP 105565 / TT01) (Photorhabdus luminescens subsp. laumondii).